The following is a 315-amino-acid chain: Pantothenate kinase (315 aa).

94 to 101 lines the ATP pocket; sequence GSVAVGKS.

The protein belongs to the prokaryotic pantothenate kinase family.

It localises to the cytoplasm. The catalysed reaction is (R)-pantothenate + ATP = (R)-4'-phosphopantothenate + ADP + H(+). It functions in the pathway cofactor biosynthesis; coenzyme A biosynthesis; CoA from (R)-pantothenate: step 1/5. The chain is Pantothenate kinase from Shewanella amazonensis (strain ATCC BAA-1098 / SB2B).